Reading from the N-terminus, the 421-residue chain is ATP-dependent RNA helicase RhlB (421 aa).

The Q motif signature appears at Q9 to A37. A Helicase ATP-binding domain is found at L40–V219. Residue A53–T60 coordinates ATP. Positions D165–D168 match the DEAD box motif. Residues R245 to M390 enclose the Helicase C-terminal domain. The disordered stretch occupies residues P396–G421. Positions S402 to P414 are enriched in low complexity.

Belongs to the DEAD box helicase family. RhlB subfamily. Component of the RNA degradosome, which is a multiprotein complex involved in RNA processing and mRNA degradation.

It is found in the cytoplasm. It catalyses the reaction ATP + H2O = ADP + phosphate + H(+). Its function is as follows. DEAD-box RNA helicase involved in RNA degradation. Has RNA-dependent ATPase activity and unwinds double-stranded RNA. This chain is ATP-dependent RNA helicase RhlB, found in Salmonella paratyphi A (strain AKU_12601).